Reading from the N-terminus, the 556-residue chain is 2-succinyl-5-enolpyruvyl-6-hydroxy-3-cyclohexene-1-carboxylate synthase (556 aa).

The protein belongs to the TPP enzyme family. MenD subfamily. As to quaternary structure, homodimer. It depends on Mg(2+) as a cofactor. Mn(2+) serves as cofactor. The cofactor is thiamine diphosphate.

It catalyses the reaction isochorismate + 2-oxoglutarate + H(+) = 5-enolpyruvoyl-6-hydroxy-2-succinyl-cyclohex-3-ene-1-carboxylate + CO2. It participates in quinol/quinone metabolism; 1,4-dihydroxy-2-naphthoate biosynthesis; 1,4-dihydroxy-2-naphthoate from chorismate: step 2/7. The protein operates within quinol/quinone metabolism; menaquinone biosynthesis. Functionally, catalyzes the thiamine diphosphate-dependent decarboxylation of 2-oxoglutarate and the subsequent addition of the resulting succinic semialdehyde-thiamine pyrophosphate anion to isochorismate to yield 2-succinyl-5-enolpyruvyl-6-hydroxy-3-cyclohexene-1-carboxylate (SEPHCHC). This Salmonella agona (strain SL483) protein is 2-succinyl-5-enolpyruvyl-6-hydroxy-3-cyclohexene-1-carboxylate synthase.